The sequence spans 363 residues: Chalcone synthase B (363 aa).

Residue cysteine 170 is part of the active site.

This sequence belongs to the thiolase-like superfamily. Chalcone/stilbene synthases family.

It catalyses the reaction (E)-4-coumaroyl-CoA + 3 malonyl-CoA + 3 H(+) = 2',4,4',6'-tetrahydroxychalcone + 3 CO2 + 4 CoA. It participates in secondary metabolite biosynthesis; flavonoid biosynthesis. In terms of biological role, the primary product of this enzyme is 4,2',4',6'-tetrahydroxychalcone (also termed naringenin-chalcone or chalcone) which can under specific conditions spontaneously isomerize into naringenin. The polypeptide is Chalcone synthase B (CHSB) (Ipomoea nil (Japanese morning glory)).